A 117-amino-acid chain; its full sequence is Nitrogen regulatory protein GlnK1 (117 aa).

Residues threonine 32, 40 to 42 (GAQ), and 92 to 95 (GSGK) each bind ADP. Residues threonine 32, 40–42 (GAQ), and 92–95 (GSGK) each bind ATP.

The protein belongs to the P(II) protein family. Homotrimer. Interacts and forms stable complexes with the glutamine synthetase GlnA1.

It localises to the cytoplasm. Inhibitory effects on GlnA1 are abolished in the presence of the effector 2-oxoglutarate. In terms of biological role, involved in the regulation of nitrogen metabolism. Regulates the activity of its targets by protein-protein interaction in response to the nitrogen status of the cell. Allows finetuning control of the glutamine synthetase GlnA1 under changing nitrogen availabilities via direct protein interaction. In Methanosarcina mazei (strain ATCC BAA-159 / DSM 3647 / Goe1 / Go1 / JCM 11833 / OCM 88) (Methanosarcina frisia), this protein is Nitrogen regulatory protein GlnK1.